Here is a 311-residue protein sequence, read N- to C-terminus: Probable manganese-dependent inorganic pyrophosphatase (311 aa).

Residues His-9, Asp-13, Asp-15, Asp-75, His-97, and Asp-149 each coordinate Mn(2+).

This sequence belongs to the PPase class C family. The cofactor is Mn(2+).

The protein localises to the cytoplasm. The catalysed reaction is diphosphate + H2O = 2 phosphate + H(+). This chain is Probable manganese-dependent inorganic pyrophosphatase, found in Lactobacillus gasseri (strain ATCC 33323 / DSM 20243 / BCRC 14619 / CIP 102991 / JCM 1131 / KCTC 3163 / NCIMB 11718 / NCTC 13722 / AM63).